The chain runs to 439 residues: Protein PHYTOCHROME KINASE SUBSTRATE 1 (439 aa).

Residues 1–14 show a composition bias toward polar residues; that stretch reads MVTLTPSSASTPKT. Disordered regions lie at residues 1 to 22, 54 to 80, and 100 to 139; these read MVTL…MKNN, KTLN…APED, and QGSS…SSWN. Positions 63–79 are enriched in basic and acidic residues; that stretch reads KQEEFGDEKKMVKKAPE. 2 stretches are compositionally biased toward polar residues: residues 100 to 109 and 118 to 139; these read QGSSVLSLTN and DSKQ…SSWN. Residues serine 238 and serine 244 each carry the phosphoserine modification. Disordered stretches follow at residues 259 to 311 and 355 to 439; these read LPLP…PTCY and TAKS…LYSQ. The span at 412 to 421 shows a compositional bias: basic and acidic residues; that stretch reads TKPKSFETRR. A compositionally biased stretch (low complexity) spans 424 to 439; the sequence is SNSSISHTQSSLLYSQ.

It belongs to the PKS family. As to quaternary structure, interacts with PKS2, RPT3, PHOT1, PHOT2 and the C-termini of both phytochromes A (phyA) and B (phyB). Binds both spectral forms of phytochrome, Pr and Pfr. Phosphorylated on Ser and to a lower extent on Thr by phytochromes. Phosphorylation is stimulated twofold by red light. In terms of tissue distribution, expressed in young seedlings in both darkness and light. Moderate in leaves and very low in roots and flowers. Expressed in the elongation zone of the root and hypocotyl.

It is found in the cell membrane. Functionally, may be responsible for light-regulated cytoplasmic sequestration of phytochromes or may be a negative regulator of phytochrome B signaling. Component of the network that modulates the very low-fluence response (VLFR) branch of phyA signaling. Acts positively in PHOT1 signaling. Regulates phytochrome-mediated photomorphogenesis and hypocotyl phototropism. Involved in the control of leaf flattening and leaf positioning. Promotes negative root phototropism and negatively regulates root gravitropism. May act by controlling auxin homeostasis. The polypeptide is Protein PHYTOCHROME KINASE SUBSTRATE 1 (PKS1) (Arabidopsis thaliana (Mouse-ear cress)).